Consider the following 763-residue polypeptide: 5-methyltetrahydropteroyltriglutamate--homocysteine methyltransferase (763 aa).

Residues 16–19 (RELK) and K121 contribute to the 5-methyltetrahydropteroyltri-L-glutamate site. L-homocysteine contacts are provided by residues 440 to 442 (IGS) and E493. L-methionine is bound by residues 440 to 442 (IGS) and E493. Residues 524–525 (RC) and W570 contribute to the 5-methyltetrahydropteroyltri-L-glutamate site. D608 contacts L-homocysteine. Residue D608 coordinates L-methionine. E614 contributes to the 5-methyltetrahydropteroyltri-L-glutamate binding site. 3 residues coordinate Zn(2+): H650, C652, and E674. H703 serves as the catalytic Proton donor. C735 serves as a coordination point for Zn(2+).

Belongs to the vitamin-B12 independent methionine synthase family. Requires Zn(2+) as cofactor.

It catalyses the reaction 5-methyltetrahydropteroyltri-L-glutamate + L-homocysteine = tetrahydropteroyltri-L-glutamate + L-methionine. Its pathway is amino-acid biosynthesis; L-methionine biosynthesis via de novo pathway; L-methionine from L-homocysteine (MetE route): step 1/1. In terms of biological role, catalyzes the transfer of a methyl group from 5-methyltetrahydrofolate to homocysteine resulting in methionine formation. The chain is 5-methyltetrahydropteroyltriglutamate--homocysteine methyltransferase from Paraburkholderia phymatum (strain DSM 17167 / CIP 108236 / LMG 21445 / STM815) (Burkholderia phymatum).